The primary structure comprises 269 residues: tRNA pseudouridine synthase A (269 aa).

Catalysis depends on Asp55, which acts as the Nucleophile. Tyr111 is a binding site for substrate.

This sequence belongs to the tRNA pseudouridine synthase TruA family.

It catalyses the reaction uridine(38/39/40) in tRNA = pseudouridine(38/39/40) in tRNA. Functionally, formation of pseudouridine at positions 38, 39 and 40 in the anticodon stem and loop of transfer RNAs. The polypeptide is tRNA pseudouridine synthase A (Methanosarcina mazei (strain ATCC BAA-159 / DSM 3647 / Goe1 / Go1 / JCM 11833 / OCM 88) (Methanosarcina frisia)).